A 367-amino-acid polypeptide reads, in one-letter code: UDP-N-acetylglucosamine--N-acetylmuramyl-(pentapeptide) pyrophosphoryl-undecaprenol N-acetylglucosamine transferase (367 aa).

UDP-N-acetyl-alpha-D-glucosamine-binding positions include threonine 15–glycine 17, asparagine 127, arginine 163, serine 191, isoleucine 249, and glutamine 294.

It belongs to the glycosyltransferase 28 family. MurG subfamily.

It is found in the cell inner membrane. The catalysed reaction is di-trans,octa-cis-undecaprenyl diphospho-N-acetyl-alpha-D-muramoyl-L-alanyl-D-glutamyl-meso-2,6-diaminopimeloyl-D-alanyl-D-alanine + UDP-N-acetyl-alpha-D-glucosamine = di-trans,octa-cis-undecaprenyl diphospho-[N-acetyl-alpha-D-glucosaminyl-(1-&gt;4)]-N-acetyl-alpha-D-muramoyl-L-alanyl-D-glutamyl-meso-2,6-diaminopimeloyl-D-alanyl-D-alanine + UDP + H(+). Its pathway is cell wall biogenesis; peptidoglycan biosynthesis. In terms of biological role, cell wall formation. Catalyzes the transfer of a GlcNAc subunit on undecaprenyl-pyrophosphoryl-MurNAc-pentapeptide (lipid intermediate I) to form undecaprenyl-pyrophosphoryl-MurNAc-(pentapeptide)GlcNAc (lipid intermediate II). In Burkholderia lata (strain ATCC 17760 / DSM 23089 / LMG 22485 / NCIMB 9086 / R18194 / 383), this protein is UDP-N-acetylglucosamine--N-acetylmuramyl-(pentapeptide) pyrophosphoryl-undecaprenol N-acetylglucosamine transferase.